Reading from the N-terminus, the 187-residue chain is MMLLDLEEKTRVLVEDIVERSAIGSGSIFVLGLSSSEVVGGIIGKASSREIGQRIVKTILEVLEPKGIYLAVQGCEHLNRALVVERELALAKDLEIVNVLPTLHAGGSGQLAAFDYMEDPVEVEEILAQAGIDIGDTSIGMHVKRVQVPLRPIISELGGAHVTALASRPKLIGGARAEYLADPIRKN.

This sequence belongs to the UPF0340 family.

This chain is UPF0340 protein stu1894, found in Streptococcus thermophilus (strain ATCC BAA-250 / LMG 18311).